We begin with the raw amino-acid sequence, 760 residues long: Exostosin-1 (760 aa).

Residues 1-6 (MQAKKR) are Cytoplasmic-facing. A helical; Signal-anchor for type II membrane protein membrane pass occupies residues 7–25 (YILVFVSCAFLAYAYFGGY). Over 26–760 (RLKVSPLRPR…KYRQIELVGS (735 aa)) the chain is Lumenal. N-linked (GlcNAc...) asparagine glycosylation is found at Asn71 and Asn327. UDP-N-acetyl-alpha-D-glucosamine is bound at residue Arg437. Asn476 carries an N-linked (GlcNAc...) asparagine glycan. Positions 540–560 (LGGSTRSQGAGPTSQTTEGRP) are disordered. Over residues 541–560 (GGSTRSQGAGPTSQTTEGRP) the composition is skewed to polar residues. 7 residues coordinate UDP-N-acetyl-alpha-D-glucosamine: Arg565, Asp581, Glu582, Asp583, Glu669, Asp670, and Arg713. Asp583 lines the Mn(2+) pocket. Cys668 and Cys716 form a disulfide bridge. The active site involves Asp670.

The protein belongs to the glycosyltransferase 47 family. In terms of assembly, interacts with sau. It depends on Mn(2+) as a cofactor. Ubiquitously expressed in early embryos. Later (in stage 10 embryos), it is expressed at higher level in the nervous system. Ubiquitously expressed in wing imaginal disk.

The protein resides in the endoplasmic reticulum membrane. The protein localises to the golgi apparatus membrane. It carries out the reaction 3-O-{[(1-&gt;4)-beta-D-GlcA-(1-&gt;4)-alpha-D-GlcNAc](n)-(1-&gt;4)-beta-D-GlcA-(1-&gt;3)-beta-D-Gal-(1-&gt;3)-beta-D-Gal-(1-&gt;4)-beta-D-Xyl}-L-seryl-[protein] + UDP-N-acetyl-alpha-D-glucosamine = 3-O-{alpha-D-GlcNAc-[(1-&gt;4)-beta-D-GlcA-(1-&gt;4)-alpha-D-GlcNAc](n)-(1-&gt;4)-beta-D-GlcA-(1-&gt;3)-beta-D-Gal-(1-&gt;3)-beta-D-Gal-(1-&gt;4)-beta-D-Xyl}-L-seryl-[protein] + UDP + H(+). It catalyses the reaction 3-O-{alpha-D-GlcNAc-[(1-&gt;4)-beta-D-GlcA-(1-&gt;4)-alpha-D-GlcNAc](n)-(1-&gt;4)-beta-D-GlcA-(1-&gt;3)-beta-D-Gal-(1-&gt;3)-beta-D-Gal-(1-&gt;4)-beta-D-Xyl}-L-seryl-[protein] + UDP-alpha-D-glucuronate = 3-O-{[(1-&gt;4)-beta-D-GlcA-(1-&gt;4)-alpha-D-GlcNAc](n+1)-(1-&gt;4)-beta-D-GlcA-(1-&gt;3)-beta-D-Gal-(1-&gt;3)-beta-D-Gal-(1-&gt;4)-beta-D-Xyl}-L-seryl-[protein] + UDP + H(+). The protein operates within protein modification; protein glycosylation. It functions in the pathway glycan metabolism; heparan sulfate biosynthesis. Its pathway is glycan metabolism; heparin biosynthesis. Functionally, glycosyltransferase required for the biosynthesis of heparan-sulfate and responsible for the alternating addition of beta-1-4-linked glucuronic acid (GlcA) and alpha-1-4-linked N-acetylglucosamine (GlcNAc) units to nascent heparan sulfate chains. Botv is the trigger of heparan sulfate chain initiation and polymerization takes place by a complex of ttv and sotv. Plays a central role in the diffusion of morphogens hedgehog (hh), wingless (wg) and decapentaplegic (dpp) via its role in heparan sulfate proteoglycans (HSPGs) biosynthesis which are required for movement of hh, dpp and wg morphogens. In Drosophila melanogaster (Fruit fly), this protein is Exostosin-1 (ttv).